The chain runs to 131 residues: Modulator protein MzrA (131 aa).

At 1–14 (MSIRWLFPKLTPRK) the chain is on the cytoplasmic side. The chain crosses the membrane as a helical span at residues 15–31 (VARILILLALPIIALTQ). Residues 32–131 (SQSLRHSQDD…KLTQKQSKLG (100 aa)) are Periplasmic-facing.

This sequence belongs to the MzrA family. In terms of assembly, interacts with EnvZ.

Its subcellular location is the cell inner membrane. Modulates the activity of the EnvZ/OmpR two-component regulatory system, probably by directly modulating EnvZ enzymatic activity and increasing stability of phosphorylated OmpR. This chain is Modulator protein MzrA, found in Pectobacterium carotovorum subsp. carotovorum (strain PC1).